A 119-amino-acid chain; its full sequence is Protein TusC (119 aa).

Belongs to the DsrF/TusC family. Heterohexamer, formed by a dimer of trimers. The hexameric TusBCD complex contains 2 copies each of TusB, TusC and TusD. The TusBCD complex interacts with TusE.

The protein resides in the cytoplasm. Its function is as follows. Part of a sulfur-relay system required for 2-thiolation of 5-methylaminomethyl-2-thiouridine (mnm(5)s(2)U) at tRNA wobble positions. The chain is Protein TusC from Serratia proteamaculans (strain 568).